A 37-amino-acid chain; its full sequence is Cytochrome b6-f complex subunit 5 (37 aa).

The chain crosses the membrane as a helical span at residues 5–25 (LLCGIVLGLIPVTLLGLFVAA).

It belongs to the PetG family. The 4 large subunits of the cytochrome b6-f complex are cytochrome b6, subunit IV (17 kDa polypeptide, PetD), cytochrome f and the Rieske protein, while the 4 small subunits are PetG, PetL, PetM and PetN. The complex functions as a dimer.

Its subcellular location is the cellular thylakoid membrane. In terms of biological role, component of the cytochrome b6-f complex, which mediates electron transfer between photosystem II (PSII) and photosystem I (PSI), cyclic electron flow around PSI, and state transitions. PetG is required for either the stability or assembly of the cytochrome b6-f complex. This Synechococcus sp. (strain WH7803) protein is Cytochrome b6-f complex subunit 5.